Consider the following 506-residue polypeptide: Tabersonine 6,7-epoxidase isoform 1 (506 aa).

A helical transmembrane segment spans residues 1-21 (MEFVVSLFAFVVSCFILLKVA). 2 N-linked (GlcNAc...) asparagine glycosylation sites follow: Asn173 and Asn261. Cys441 serves as a coordination point for heme.

The protein belongs to the cytochrome P450 family. Heme is required as a cofactor. As to expression, mainly expressed in roots.

It localises to the endoplasmic reticulum membrane. The enzyme catalyses (-)-tabersonine + reduced [NADPH--hemoprotein reductase] + O2 = lochnericine + oxidized [NADPH--hemoprotein reductase] + H2O + H(+). Its pathway is alkaloid biosynthesis. Functionally, component of the monoterpenoid indole alkaloids (MIAs, e.g. echitovenine, tabersonine, lochnericine, 19-hydroxytabersonine and horhammericine) biosynthetic pathway; MIAs are used in cancer treatment and other medical applications. Cytochrome P450 catalyzing the conversion of tabersonine to lochnericine. The polypeptide is Tabersonine 6,7-epoxidase isoform 1 (Catharanthus roseus (Madagascar periwinkle)).